Reading from the N-terminus, the 318-residue chain is uncharacterized protein (318 aa).

To A.aeolicus AA07 and AA11.

This is an uncharacterized protein from Aquifex aeolicus (strain VF5).